Reading from the N-terminus, the 260-residue chain is Pyridoxine 5'-phosphate synthase (260 aa).

Asn15 is a 3-amino-2-oxopropyl phosphate binding site. 17–18 provides a ligand contact to 1-deoxy-D-xylulose 5-phosphate; it reads DH. Arg26 contacts 3-amino-2-oxopropyl phosphate. His51 functions as the Proton acceptor in the catalytic mechanism. 1-deoxy-D-xylulose 5-phosphate is bound by residues Arg53 and His58. Glu78 acts as the Proton acceptor in catalysis. 1-deoxy-D-xylulose 5-phosphate is bound at residue Thr108. His199 (proton donor) is an active-site residue. 3-amino-2-oxopropyl phosphate-binding positions include Gly200 and 221–222; that span reads GH.

The protein belongs to the PNP synthase family. As to quaternary structure, homooctamer; tetramer of dimers.

The protein localises to the cytoplasm. It catalyses the reaction 3-amino-2-oxopropyl phosphate + 1-deoxy-D-xylulose 5-phosphate = pyridoxine 5'-phosphate + phosphate + 2 H2O + H(+). Its pathway is cofactor biosynthesis; pyridoxine 5'-phosphate biosynthesis; pyridoxine 5'-phosphate from D-erythrose 4-phosphate: step 5/5. Its function is as follows. Catalyzes the complicated ring closure reaction between the two acyclic compounds 1-deoxy-D-xylulose-5-phosphate (DXP) and 3-amino-2-oxopropyl phosphate (1-amino-acetone-3-phosphate or AAP) to form pyridoxine 5'-phosphate (PNP) and inorganic phosphate. This chain is Pyridoxine 5'-phosphate synthase, found in Cupriavidus pinatubonensis (strain JMP 134 / LMG 1197) (Cupriavidus necator (strain JMP 134)).